We begin with the raw amino-acid sequence, 479 residues long: Serine palmitoyltransferase 1 (479 aa).

Residues 1–16 (MFLFDIYNNILYYTKE) lie on the Lumenal side of the membrane. A helical membrane pass occupies residues 17–37 (FIVTSTSPNLFIHGLMAVFII). Residues 38–479 (YLLTKRPFKP…KCTSFVLESN (442 aa)) lie on the Cytoplasmic side of the membrane.

It belongs to the class-II pyridoxal-phosphate-dependent aminotransferase family. In terms of assembly, forms a heterodimer with sptB. Pyridoxal 5'-phosphate is required as a cofactor.

The protein localises to the endoplasmic reticulum membrane. The enzyme catalyses L-serine + hexadecanoyl-CoA + H(+) = 3-oxosphinganine + CO2 + CoA. The protein operates within lipid metabolism; sphingolipid metabolism. Its function is as follows. Component of serine palmitoyltransferase (SPT), which catalyzes the committed step in the synthesis of sphingolipids, the condensation of serine with palmitoyl CoA to form the long chain base 3-ketosphinganine. The protein is Serine palmitoyltransferase 1 (sptA) of Dictyostelium discoideum (Social amoeba).